We begin with the raw amino-acid sequence, 242 residues long: Purine nucleoside phosphorylase SCO2081 (242 aa).

Zn(2+)-binding residues include His-68, Cys-106, and His-123.

The protein belongs to the purine nucleoside phosphorylase YfiH/LACC1 family. As to quaternary structure, homodimer. Requires Cu(2+) as cofactor. Zn(2+) is required as a cofactor.

It catalyses the reaction adenosine + phosphate = alpha-D-ribose 1-phosphate + adenine. The enzyme catalyses S-methyl-5'-thioadenosine + phosphate = 5-(methylsulfanyl)-alpha-D-ribose 1-phosphate + adenine. It carries out the reaction inosine + phosphate = alpha-D-ribose 1-phosphate + hypoxanthine. The catalysed reaction is adenosine + H2O + H(+) = inosine + NH4(+). Purine nucleoside enzyme that catalyzes the phosphorolysis of adenosine and inosine nucleosides, yielding D-ribose 1-phosphate and the respective free bases, adenine and hypoxanthine. Also catalyzes the phosphorolysis of S-methyl-5'-thioadenosine into adenine and S-methyl-5-thio-alpha-D-ribose 1-phosphate. Also has adenosine deaminase activity. The polypeptide is Purine nucleoside phosphorylase SCO2081 (Streptomyces coelicolor (strain ATCC BAA-471 / A3(2) / M145)).